Here is a 167-residue protein sequence, read N- to C-terminus: MADDATRKAVSEIPLLKTNSGPRDKELWVQRLREEYLAPIKYVENNKAADNDWFRLESNKEGTRWFGKCWYIHDLLKYEFDIEFDIPVTYPTTAPEVAIPELDGKTAKMYRGGKICLTDHFKPLWARNVPKFGLAHLMALGLGPWLAVEIPDLISKGLITHREQQGS.

Catalysis depends on Cys116, which acts as the Glycyl thioester intermediate.

It belongs to the ubiquitin-conjugating enzyme family. UFC1 subfamily. Interacts with UBA5 (via C-terminus). Interacts with UFL1. Interacts with UFM1.

Functionally, E2-like enzyme which specifically catalyzes the second step in ufmylation. Accepts the ubiquitin-like modifier UFM1 from the E1 enzyme UBA5 and forms an intermediate with UFM1 via a thioester linkage. Ufmylation is involved in various processes, such as ribosome recycling, response to DNA damage, interferon response or reticulophagy (also called ER-phagy). The sequence is that of Ubiquitin-fold modifier-conjugating enzyme 1 from Esox lucius (Northern pike).